Reading from the N-terminus, the 554-residue chain is uncharacterized protein (554 aa).

Positions Met-1 to Glu-25 are disordered. Ser-13 is modified (phosphoserine). 6 helical membrane-spanning segments follow: residues Phe-82–Ile-102, Ala-120–Leu-140, Trp-149–Pro-169, Phe-171–Val-191, Val-210–Ile-230, and Phe-253–Val-273. Residue Ser-334 is modified to Phosphoserine. The next 6 membrane-spanning stretches (helical) occupy residues Leu-364–Leu-384, Ser-412–Phe-432, Lys-437–Ala-457, Ala-462–Tyr-482, Ala-497–Met-517, and Ala-525–Pro-545.

Belongs to the major facilitator superfamily.

The protein localises to the endoplasmic reticulum. It is found in the membrane. This is an uncharacterized protein from Schizosaccharomyces pombe (strain 972 / ATCC 24843) (Fission yeast).